The sequence spans 396 residues: Alanine racemase (396 aa).

K46 serves as the catalytic Proton acceptor; specific for D-alanine. K46 is modified (N6-(pyridoxal phosphate)lysine). Substrate is bound at residue R145. The active-site Proton acceptor; specific for L-alanine is the Y280. Residue M328 coordinates substrate.

It belongs to the alanine racemase family. Pyridoxal 5'-phosphate serves as cofactor.

The enzyme catalyses L-alanine = D-alanine. It participates in amino-acid biosynthesis; D-alanine biosynthesis; D-alanine from L-alanine: step 1/1. Its function is as follows. Catalyzes the interconversion of L-alanine and D-alanine. May also act on other amino acids. The chain is Alanine racemase (alr) from Brucella canis (strain ATCC 23365 / NCTC 10854 / RM-666).